Reading from the N-terminus, the 250-residue chain is MMGGECKVHQLQAAGDGGPGAVAPFVAKTFHMVSDPSTNAVVRWGGAGNTFLVLDPAAFSDFLLPSYFKHRNFASFVRQLNTYGFRKVDPDRWEFAHESFLRGQAQLLPRIVRKKKKGGAAPGCRELCEEGEEVRGTIEAVQRLREEQRGMEEELQAMDQRLRAAESRPGQMMAFLAKLADEPGVVLRAMLAKKEELAAAGNNGSDPCKRRRIGADTGRGGVATGGDAAEMAQSRGTVPFPFSVLGQVFY.

Residues 129-182 are a coiled coil; sequence EEGEEVRGTIEAVQRLREEQRGMEEELQAMDQRLRAAESRPGQMMAFLAKLADE. A hydrophobic repeat HR-A/B region spans residues 144–180; the sequence is LREEQRGMEEELQAMDQRLRAAESRPGQMMAFLAKLA. The interval 199 to 226 is disordered; sequence AAGNNGSDPCKRRRIGADTGRGGVATGG. The short motif at 209-212 is the Nuclear localization signal element; it reads KRRR.

Belongs to the HSF family. Class C subfamily. Homotrimer. Exhibits temperature-dependent phosphorylation.

Its subcellular location is the nucleus. In terms of biological role, transcriptional regulator that specifically binds DNA of heat shock promoter elements (HSE). This chain is Heat stress transcription factor C-1b (HSFC1B), found in Oryza sativa subsp. japonica (Rice).